The primary structure comprises 510 residues: Cytochrome P450 703A2 (510 aa).

A helical membrane pass occupies residues 2 to 22 (ILVLASLFAVLILNVLLWRWL). Position 451 (C451) interacts with heme.

It belongs to the cytochrome P450 family. It depends on heme as a cofactor.

The protein localises to the membrane. It carries out the reaction dodecanoate + reduced [NADPH--hemoprotein reductase] + O2 = 7-hydroxydodecanoate + oxidized [NADPH--hemoprotein reductase] + H2O + H(+). In terms of biological role, involved in pollen wall development. Catalyzes the conversion of medium-chain saturated fatty acids to the corresponding monohydroxylated fatty acids, with a preferential hydroxylation of lauric acid at the C-7 position. In-chain hydroxylated fatty acids, together with omega-hydroxylated fatty acids, are key monomeric aliphatic building blocks for sporopollenin synthesis during exine formation. The polypeptide is Cytochrome P450 703A2 (Arabidopsis thaliana (Mouse-ear cress)).